The chain runs to 195 residues: Phosphoheptose isomerase (195 aa).

The region spanning 35–195 (IVSKILQAGN…IVEYNLFKME (161 aa)) is the SIS domain. Position 51-53 (51-53 (NGG)) interacts with substrate. Zn(2+)-binding residues include His60 and Glu64. Residues Glu64, 95–96 (ND), 121–123 (STS), Ser126, and Gln173 each bind substrate. Zn(2+)-binding residues include Gln173 and His181.

This sequence belongs to the SIS family. GmhA subfamily. Zn(2+) is required as a cofactor.

The protein localises to the cytoplasm. The catalysed reaction is 2 D-sedoheptulose 7-phosphate = D-glycero-alpha-D-manno-heptose 7-phosphate + D-glycero-beta-D-manno-heptose 7-phosphate. Its pathway is carbohydrate biosynthesis; D-glycero-D-manno-heptose 7-phosphate biosynthesis; D-glycero-alpha-D-manno-heptose 7-phosphate and D-glycero-beta-D-manno-heptose 7-phosphate from sedoheptulose 7-phosphate: step 1/1. In terms of biological role, catalyzes the isomerization of sedoheptulose 7-phosphate in D-glycero-D-manno-heptose 7-phosphate. This Leptospira interrogans serogroup Icterohaemorrhagiae serovar copenhageni (strain Fiocruz L1-130) protein is Phosphoheptose isomerase.